A 151-amino-acid chain; its full sequence is Deoxyuridine 5'-triphosphate nucleotidohydrolase (151 aa).

Substrate is bound by residues 70–72, Asn-83, 87–89, and Met-97; these read RSG and LID.

Belongs to the dUTPase family. Mg(2+) is required as a cofactor.

The catalysed reaction is dUTP + H2O = dUMP + diphosphate + H(+). It functions in the pathway pyrimidine metabolism; dUMP biosynthesis; dUMP from dCTP (dUTP route): step 2/2. Its function is as follows. This enzyme is involved in nucleotide metabolism: it produces dUMP, the immediate precursor of thymidine nucleotides and it decreases the intracellular concentration of dUTP so that uracil cannot be incorporated into DNA. In Actinobacillus pleuropneumoniae serotype 5b (strain L20), this protein is Deoxyuridine 5'-triphosphate nucleotidohydrolase.